A 217-amino-acid polypeptide reads, in one-letter code: Enolase-phosphatase E1 (217 aa).

Mg(2+) is bound by residues Asp9 and Glu11. Substrate contacts are provided by residues 112–113 (SS) and Lys151. Asp176 serves as a coordination point for Mg(2+).

The protein belongs to the HAD-like hydrolase superfamily. MasA/MtnC family. As to quaternary structure, monomer. Requires Mg(2+) as cofactor.

The protein resides in the cytoplasm. It is found in the nucleus. It catalyses the reaction 5-methylsulfanyl-2,3-dioxopentyl phosphate + H2O = 1,2-dihydroxy-5-(methylsulfanyl)pent-1-en-3-one + phosphate. It participates in amino-acid biosynthesis; L-methionine biosynthesis via salvage pathway; L-methionine from S-methyl-5-thio-alpha-D-ribose 1-phosphate: step 3/6. The protein operates within amino-acid biosynthesis; L-methionine biosynthesis via salvage pathway; L-methionine from S-methyl-5-thio-alpha-D-ribose 1-phosphate: step 4/6. In terms of biological role, bifunctional enzyme that catalyzes the enolization of 2,3-diketo-5-methylthiopentyl-1-phosphate (DK-MTP-1-P) into the intermediate 2-hydroxy-3-keto-5-methylthiopentenyl-1-phosphate (HK-MTPenyl-1-P), which is then dephosphorylated to form the acireductone 1,2-dihydroxy-3-keto-5-methylthiopentene (DHK-MTPene). The protein is Enolase-phosphatase E1 of Lachancea thermotolerans (strain ATCC 56472 / CBS 6340 / NRRL Y-8284) (Yeast).